The chain runs to 418 residues: Light-independent protochlorophyllide reductase subunit N (418 aa).

Positions 17, 42, and 103 each coordinate [4Fe-4S] cluster.

It belongs to the BchN/ChlN family. Protochlorophyllide reductase is composed of three subunits; ChlL, ChlN and ChlB. Forms a heterotetramer of two ChlB and two ChlN subunits. [4Fe-4S] cluster is required as a cofactor.

It catalyses the reaction chlorophyllide a + oxidized 2[4Fe-4S]-[ferredoxin] + 2 ADP + 2 phosphate = protochlorophyllide a + reduced 2[4Fe-4S]-[ferredoxin] + 2 ATP + 2 H2O. The protein operates within porphyrin-containing compound metabolism; chlorophyll biosynthesis (light-independent). In terms of biological role, component of the dark-operative protochlorophyllide reductase (DPOR) that uses Mg-ATP and reduced ferredoxin to reduce ring D of protochlorophyllide (Pchlide) to form chlorophyllide a (Chlide). This reaction is light-independent. The NB-protein (ChlN-ChlB) is the catalytic component of the complex. The protein is Light-independent protochlorophyllide reductase subunit N of Prochlorococcus marinus (strain MIT 9313).